Here is a 927-residue protein sequence, read N- to C-terminus: Band 3 anion transport protein (927 aa).

An N-acetylmethionine modification is found at M1. Over 1–420 (MGDMQDHEKV…LSDITDALSP (420 aa)) the chain is Cytoplasmic. A Phosphoserine modification is found at S18. Y31 and Y56 each carry phosphotyrosine. The interval 69–303 (SQVYVELQEL…LGRAAATLMT (235 aa)) is globular. Residues 190-199 (AVLTRSGAPS) are interaction with ANK1. A phosphoserine mark is found at S199 and S222. The dimerization arm stretch occupies residues 317–370 (RGELLSSLDSFLDCSLVLPPTEAPSEKALLNLVPVQKELLRKRYLPRPAKPDPN). The interval 367–390 (PDPNLYEALDGGKEGPGDEDDPLR) is disordered. The residue at position 372 (Y372) is a Phosphotyrosine. Residues 421–444 (QVLAAVIFIYFAALSPAVTFGGLL) traverse the membrane as a helical segment. Residues 445–452 (GEKTRNLM) lie on the Extracellular side of the membrane. The helical transmembrane segment at 453-473 (GVSELLISTAVQGILFALLGA) threads the bilayer. Over 474 to 476 (QPL) the chain is Cytoplasmic. Residues 477-493 (LVLGFSGPLLVFEEAFY) form a discontinuously helical membrane-spanning segment. Over 494–502 (SFCESNNLE) the chain is Extracellular. Residues 503 to 523 (YIVGRAWIGFWLILLVVLVVA) traverse the membrane as a helical segment. Residues 524–535 (FEGSFLVQYISR) lie on the Cytoplasmic side of the membrane. A helical transmembrane segment spans residues 536-558 (YTQEIFSFLISLIFIYETFSKLI). The Extracellular portion of the chain corresponds to 559–586 (KIFQDYPLQESYAPVVMKPKPQGPVPNT). A helical transmembrane segment spans residues 587 to 607 (ALLSLVLMVGTFLLAMMLRKF). The Cytoplasmic portion of the chain corresponds to 608–618 (KNSTYFPGKLR). The chain crosses the membrane as a helical span at residues 619-639 (RVIGDFGVPISILIMVLVDTF). Topologically, residues 640–679 (IKNTYTQKLSVPDGLKVSNSSARGWVIHPLGLYNHFPKWM) are extracellular. N-linked (GlcNAc...) asparagine glycosylation is present at N658. The chain crosses the membrane as a helical span at residues 680–700 (MFASVLPALLVFILIFLESQI). The Cytoplasmic segment spans residues 701-716 (TTLIVSKPERKMIKGS). The helical transmembrane segment at 717–735 (GFHLDLLLVVGMGGVAALF) threads the bilayer. The chain crosses the membrane as a discontinuously helical span at residues 736–753 (GMPWLSATTVRSVTHANA). At 754–776 (LTVMGKASGPGAAAQIQEVKEQR) the chain is on the cytoplasmic side. 2 helical membrane passes run 777-797 (ISGL…PILS) and 798-816 (RIPL…ITSL). The Cytoplasmic segment spans residues 817-854 (SGIQLFDRILLLFKPPKYHPDVPFVKRVKTWRMHLFTG). Residues 855–885 (IQIICLAVLWVVKSTPASLALPFVLILTVPL) constitute an intramembrane region (discontinuously helical). Residue C859 is the site of S-palmitoyl cysteine attachment. The Cytoplasmic segment spans residues 886-927 (RRLLLPLIFRELELQCLDGDDAKVTFDEAEGLDEYDEVPMPV). Y920 carries the post-translational modification Phosphotyrosine.

Belongs to the anion exchanger (TC 2.A.31) family. In terms of assembly, a dimer in solution, but in its membrane environment, it exists primarily as a mixture of dimers and tetramers and spans the membrane asymmetrically. Component of the ankyrin-1 complex in the erythrocyte, composed of ANK1, RHCE, RHAG, SLC4A1, EPB42, GYPA, GYPB and AQP1. Interacts with STOM; this interaction positively regulates SLC4A1 activity. Interacts with GYPA; a GYPA monomer is bound at each end of the SLC4A1 dimer forming a heterotetramer. Three SLC4A1 dimers (Band 3-I, Band 3-II and Band 3-III) participates in the ankyrin-1 complex. Interacts (via the cytoplasmic domain) with EPB42; this interaction is mediated by the SLC4A1 Band 3-I dimer. Interacts (via the cytoplasmic domain) directly with ANK1; this interaction is mediated by the SLC4A1 Band 3-II and Band 3-III dimers. As to quaternary structure, interacts with TMEM139. Kidney.

It is found in the cell membrane. The protein localises to the basolateral cell membrane. It carries out the reaction hydrogencarbonate(in) + chloride(out) = hydrogencarbonate(out) + chloride(in). Functionally, functions both as a transporter that mediates electroneutral anion exchange across the cell membrane and as a structural protein. Component of the ankyrin-1 complex of the erythrocyte membrane; required for normal flexibility and stability of the erythrocyte membrane and for normal erythrocyte shape via the interactions of its cytoplasmic domain with cytoskeletal proteins, glycolytic enzymes, and hemoglobin. Functions as a transporter that mediates the 1:1 exchange of inorganic anions across the erythrocyte membrane. Mediates chloride-bicarbonate exchange in the kidney, and is required for normal acidification of the urine. The chain is Band 3 anion transport protein from Rattus norvegicus (Rat).